The chain runs to 273 residues: Proteasome subunit alpha (273 aa).

Residues Asp231 to Ser273 are disordered. Over residues Pro238–Ala249 the composition is skewed to low complexity.

Belongs to the peptidase T1A family. In terms of assembly, the 20S proteasome core is composed of 14 alpha and 14 beta subunits that assemble into four stacked heptameric rings, resulting in a barrel-shaped structure. The two inner rings, each composed of seven catalytic beta subunits, are sandwiched by two outer rings, each composed of seven alpha subunits. The catalytic chamber with the active sites is on the inside of the barrel. Has a gated structure, the ends of the cylinder being occluded by the N-termini of the alpha-subunits. Is capped by the proteasome-associated ATPase, ARC.

The protein localises to the cytoplasm. It participates in protein degradation; proteasomal Pup-dependent pathway. The formation of the proteasomal ATPase ARC-20S proteasome complex, likely via the docking of the C-termini of ARC into the intersubunit pockets in the alpha-rings, may trigger opening of the gate for substrate entry. Interconversion between the open-gate and close-gate conformations leads to a dynamic regulation of the 20S proteasome proteolysis activity. Its function is as follows. Component of the proteasome core, a large protease complex with broad specificity involved in protein degradation. This is Proteasome subunit alpha from Salinispora arenicola (strain CNS-205).